The following is a 765-amino-acid chain: 5-methyltetrahydropteroyltriglutamate--homocysteine methyltransferase (765 aa).

5-methyltetrahydropteroyltri-L-glutamate contacts are provided by residues 18-21 (REWK) and lysine 114. L-homocysteine-binding positions include 437-439 (IGS) and glutamate 490. Residues 437 to 439 (IGS) and glutamate 490 contribute to the L-methionine site. 5-methyltetrahydropteroyltri-L-glutamate is bound at residue tryptophan 567. Aspartate 605 provides a ligand contact to L-homocysteine. Aspartate 605 contacts L-methionine. Position 611 (glutamate 611) interacts with 5-methyltetrahydropteroyltri-L-glutamate. Histidine 647, cysteine 649, and glutamate 671 together coordinate Zn(2+). Histidine 700 functions as the Proton donor in the catalytic mechanism. Position 732 (cysteine 732) interacts with Zn(2+).

Belongs to the vitamin-B12 independent methionine synthase family. Zn(2+) serves as cofactor.

It carries out the reaction 5-methyltetrahydropteroyltri-L-glutamate + L-homocysteine = tetrahydropteroyltri-L-glutamate + L-methionine. It participates in amino-acid biosynthesis; L-methionine biosynthesis via de novo pathway; L-methionine from L-homocysteine (MetE route): step 1/1. In terms of biological role, catalyzes the transfer of a methyl group from 5-methyltetrahydrofolate to homocysteine resulting in methionine formation. This chain is 5-methyltetrahydropteroyltriglutamate--homocysteine methyltransferase, found in Listeria innocua serovar 6a (strain ATCC BAA-680 / CLIP 11262).